The primary structure comprises 388 residues: Methylthioribose-1-phosphate isomerase (388 aa).

The active-site Proton donor is D252.

This sequence belongs to the eIF-2B alpha/beta/delta subunits family. MtnA subfamily.

The protein localises to the cytoplasm. It is found in the nucleus. It carries out the reaction 5-(methylsulfanyl)-alpha-D-ribose 1-phosphate = 5-(methylsulfanyl)-D-ribulose 1-phosphate. It participates in amino-acid biosynthesis; L-methionine biosynthesis via salvage pathway; L-methionine from S-methyl-5-thio-alpha-D-ribose 1-phosphate: step 1/6. Its function is as follows. Catalyzes the interconversion of methylthioribose-1-phosphate (MTR-1-P) into methylthioribulose-1-phosphate (MTRu-1-P). The chain is Methylthioribose-1-phosphate isomerase from Verticillium alfalfae (strain VaMs.102 / ATCC MYA-4576 / FGSC 10136) (Verticillium wilt of alfalfa).